The primary structure comprises 171 residues: Endoribonuclease YbeY (171 aa).

Zn(2+) contacts are provided by His130, His134, and His140.

Belongs to the endoribonuclease YbeY family. It depends on Zn(2+) as a cofactor.

The protein localises to the cytoplasm. In terms of biological role, single strand-specific metallo-endoribonuclease involved in late-stage 70S ribosome quality control and in maturation of the 3' terminus of the 16S rRNA. The polypeptide is Endoribonuclease YbeY (Neisseria gonorrhoeae (strain ATCC 700825 / FA 1090)).